A 473-amino-acid chain; its full sequence is Siroheme synthase 2 (473 aa).

The interval 1 to 204 is precorrin-2 dehydrogenase /sirohydrochlorin ferrochelatase; the sequence is MDYFPIFCQL…NDHVQADQHV (204 aa). NAD(+) is bound by residues 22 to 23 and 43 to 44; these read EI and CE. At S128 the chain carries Phosphoserine. The segment at 216–473 is uroporphyrinogen-III C-methyltransferase; the sequence is GEVVLVGAGP…KVTECVAHVG (258 aa). P225 lines the S-adenosyl-L-methionine pocket. D248 (proton acceptor) is an active-site residue. The active-site Proton donor is the K270. S-adenosyl-L-methionine-binding positions include 301–303, I306, 331–332, M382, and G411; these read GGD and TA.

It in the N-terminal section; belongs to the precorrin-2 dehydrogenase / sirohydrochlorin ferrochelatase family. This sequence in the C-terminal section; belongs to the precorrin methyltransferase family.

The enzyme catalyses uroporphyrinogen III + 2 S-adenosyl-L-methionine = precorrin-2 + 2 S-adenosyl-L-homocysteine + H(+). It catalyses the reaction precorrin-2 + NAD(+) = sirohydrochlorin + NADH + 2 H(+). The catalysed reaction is siroheme + 2 H(+) = sirohydrochlorin + Fe(2+). It participates in cofactor biosynthesis; adenosylcobalamin biosynthesis; precorrin-2 from uroporphyrinogen III: step 1/1. It functions in the pathway cofactor biosynthesis; adenosylcobalamin biosynthesis; sirohydrochlorin from precorrin-2: step 1/1. The protein operates within porphyrin-containing compound metabolism; siroheme biosynthesis; precorrin-2 from uroporphyrinogen III: step 1/1. Its pathway is porphyrin-containing compound metabolism; siroheme biosynthesis; siroheme from sirohydrochlorin: step 1/1. It participates in porphyrin-containing compound metabolism; siroheme biosynthesis; sirohydrochlorin from precorrin-2: step 1/1. Its function is as follows. Multifunctional enzyme that catalyzes the SAM-dependent methylations of uroporphyrinogen III at position C-2 and C-7 to form precorrin-2 via precorrin-1. Then it catalyzes the NAD-dependent ring dehydrogenation of precorrin-2 to yield sirohydrochlorin. Finally, it catalyzes the ferrochelation of sirohydrochlorin to yield siroheme. This is Siroheme synthase 2 from Yersinia pseudotuberculosis serotype O:1b (strain IP 31758).